Reading from the N-terminus, the 477-residue chain is Glycogen synthase (477 aa).

An ADP-alpha-D-glucose-binding site is contributed by lysine 15.

The protein belongs to the glycosyltransferase 1 family. Bacterial/plant glycogen synthase subfamily.

The catalysed reaction is [(1-&gt;4)-alpha-D-glucosyl](n) + ADP-alpha-D-glucose = [(1-&gt;4)-alpha-D-glucosyl](n+1) + ADP + H(+). The protein operates within glycan biosynthesis; glycogen biosynthesis. Synthesizes alpha-1,4-glucan chains using ADP-glucose. The sequence is that of Glycogen synthase from Shigella sonnei (strain Ss046).